The following is a 127-amino-acid chain: Ribonuclease P protein component 1 (127 aa).

This sequence belongs to the eukaryotic/archaeal RNase P protein component 1 family. In terms of assembly, consists of a catalytic RNA component and at least 5 protein subunits. Forms a heterodimeric subcomplex with Rnp4. Reconstituted enzyme missing individual protein subunits is suboptimally active, showing each subunit contributes to optimization of activity.

Its subcellular location is the cytoplasm. The catalysed reaction is Endonucleolytic cleavage of RNA, removing 5'-extranucleotides from tRNA precursor.. Functionally, part of ribonuclease P (RNase P), a protein complex that generates mature tRNA molecules by cleaving their 5'-ends. Binds RNase P RNA. In Pyrococcus horikoshii (strain ATCC 700860 / DSM 12428 / JCM 9974 / NBRC 100139 / OT-3), this protein is Ribonuclease P protein component 1.